Here is a 215-residue protein sequence, read N- to C-terminus: Pyrrolidone-carboxylate peptidase (215 aa).

Catalysis depends on residues glutamate 81, cysteine 144, and histidine 168.

Belongs to the peptidase C15 family. As to quaternary structure, homotetramer.

It localises to the cytoplasm. The catalysed reaction is Release of an N-terminal pyroglutamyl group from a polypeptide, the second amino acid generally not being Pro.. Functionally, removes 5-oxoproline from various penultimate amino acid residues except L-proline. The protein is Pyrrolidone-carboxylate peptidase (pcp) of Bacillus subtilis (strain 168).